The chain runs to 69 residues: uncharacterized protein (69 aa).

A helical transmembrane segment spans residues 32–54; it reads MLGAIDVAVAVASVPTLFVVTAI.

It is found in the membrane. This is an uncharacterized protein from Sinorhizobium fredii (strain NBRC 101917 / NGR234).